We begin with the raw amino-acid sequence, 404 residues long: Serine/threonine transporter SstT (404 aa).

9 helical membrane-spanning segments follow: residues 11–31 (IINANLVLQIIFGIAAGIILA), 44–64 (LGGLFVGALKAVAPILVFVLV), 82–102 (IISLYLIGTLLAALTAVTMSF), 144–164 (TANYIGILAWAIGLGIALHHA), 179–199 (VSFIVRFIIRLAPIGIFGLVA), 218–238 (GVLLGSMAIVALVINPLMVFI), 290–310 (IPLGATINMAGAAITITVLTL), 316–336 (MGIQVDMFTALLLSVVAAISA), and 363–383 (VAMQVVGVGFIIGVIQDSAET).

This sequence belongs to the dicarboxylate/amino acid:cation symporter (DAACS) (TC 2.A.23) family.

The protein resides in the cell inner membrane. The catalysed reaction is L-serine(in) + Na(+)(in) = L-serine(out) + Na(+)(out). The enzyme catalyses L-threonine(in) + Na(+)(in) = L-threonine(out) + Na(+)(out). In terms of biological role, involved in the import of serine and threonine into the cell, with the concomitant import of sodium (symport system). This is Serine/threonine transporter SstT from Desulfotalea psychrophila (strain LSv54 / DSM 12343).